An 88-amino-acid chain; its full sequence is Large ribosomal subunit protein bL31B (88 aa).

This sequence belongs to the bacterial ribosomal protein bL31 family. Type B subfamily. As to quaternary structure, part of the 50S ribosomal subunit.

This Corynebacterium efficiens (strain DSM 44549 / YS-314 / AJ 12310 / JCM 11189 / NBRC 100395) protein is Large ribosomal subunit protein bL31B.